The primary structure comprises 879 residues: Phosphoinositide 3-kinase regulatory subunit 5 (879 aa).

Residues 23–100 (SGSTDISSNW…APYIPETSDL (78 aa)) form a heterodimerization region. 2 disordered regions span residues 314-345 (SLED…PKQD) and 570-590 (SSST…PSPS). Over residues 315 to 336 (LEDDVTEEDEEVDFEEVDDKDE) the composition is skewed to acidic residues. Residues 570-589 (SSSTNAPMTNAESPLKSPSP) are compositionally biased toward polar residues. The segment at 651 to 751 (PILADMVLYY…WSNGEKVCTS (101 aa)) is interaction with beta-gamma G protein dimers.

In terms of assembly, heterodimer. Interacts with a catalytic subunit and with beta-gamma G protein dimers.

Its subcellular location is the nucleus. It localises to the cytoplasm. The protein resides in the cell membrane. With respect to regulation, greatly activated by G gamma proteins. Functionally, regulatory subunit of the PI3K gamma complex. Required for recruitment of the catalytic subunit to the plasma membrane via interaction with beta-gamma G protein dimers. Required for G protein-mediated activation of PIK3CG. This chain is Phosphoinositide 3-kinase regulatory subunit 5 (pik3r5), found in Xenopus laevis (African clawed frog).